The following is a 495-amino-acid chain: Cornulin (495 aa).

Positions H49–A84 constitute an EF-hand domain. Positions 62, 64, 66, 68, and 73 each coordinate Ca(2+). 2 disordered regions span residues A96–G439 and L460–I481. Over residues S99 to S110 the composition is skewed to polar residues. Positions H137–G151 are enriched in low complexity. The span at V152–K194 shows a compositional bias: polar residues. Residues G196 to Q222 are compositionally biased toward basic and acidic residues. Positions T226–V242 are enriched in low complexity. Polar residues-rich tracts occupy residues E243 to V282 and Q290 to E303. Positions S307–Q324 are enriched in low complexity. A compositionally biased stretch (polar residues) spans G334–T355. Positions Q374–Q385 are enriched in low complexity. Polar residues-rich tracts occupy residues Q403 to T420 and L460 to A473.

It belongs to the S100-fused protein family. As to quaternary structure, homodimer. Expressed in the basal skin layer (at protein level). Squamous epithelia cell-specific. Expressed in the esophagus (periphery of the cells of the granular and the upper spinous layers), foreskin (granular and lower cornified cells), scalp skin (granular layer), inner root sheath of the hair follicle and in primary keratinocytes (at protein level). Expressed in the squamous epithelium of the cervix, esophagus, foreskin and larynx. Expressed in the fetal bladder and scalp skin. Expressed at very low levels in the lung, kidney, uterus, skeletal muscle, heart and fetal brain. Undetectable or barely detectable in esophageal and oral squamous cell carcinoma compared with the matched adjacent normal esophageal mucosa. Undetectable or barely detectable in larynx and esophagus from patients with pH-documented laryngopharyngeal reflux (LPR).

It localises to the cytoplasm. Functionally, promotes cell proliferation, G1/S cell cycle progression and induces expression of the cell cycle regulator CCND1. Regulates proliferation induced by pro-inflammatory cytokine response via activation of NFKB1 and PI3K/AKT signaling pathways. This is Cornulin (CRNN) from Homo sapiens (Human).